The primary structure comprises 355 residues: Alanine racemase (355 aa).

K34 (proton acceptor; specific for D-alanine) is an active-site residue. The residue at position 34 (K34) is an N6-(pyridoxal phosphate)lysine. A substrate-binding site is contributed by R133. Y249 acts as the Proton acceptor; specific for L-alanine in catalysis. M297 is a binding site for substrate.

Belongs to the alanine racemase family. Requires pyridoxal 5'-phosphate as cofactor.

It carries out the reaction L-alanine = D-alanine. The protein operates within amino-acid biosynthesis; D-alanine biosynthesis; D-alanine from L-alanine: step 1/1. Functionally, catalyzes the interconversion of L-alanine and D-alanine. May also act on other amino acids. The sequence is that of Alanine racemase (alr) from Rickettsia canadensis (strain McKiel).